We begin with the raw amino-acid sequence, 789 residues long: Glycerol-3-phosphate acyltransferase (789 aa).

The HXXXXD motif motif lies at 275 to 280; that stretch reads SHRSYI.

This sequence belongs to the GPAT/DAPAT family.

The protein localises to the cell membrane. It catalyses the reaction sn-glycerol 3-phosphate + an acyl-CoA = a 1-acyl-sn-glycero-3-phosphate + CoA. Its pathway is phospholipid metabolism; CDP-diacylglycerol biosynthesis; CDP-diacylglycerol from sn-glycerol 3-phosphate: step 1/3. This is Glycerol-3-phosphate acyltransferase from Mycobacterium tuberculosis (strain ATCC 25177 / H37Ra).